Here is a 479-residue protein sequence, read N- to C-terminus: Glycogen synthase (479 aa).

Residue Lys15 participates in ADP-alpha-D-glucose binding.

The protein belongs to the glycosyltransferase 1 family. Bacterial/plant glycogen synthase subfamily.

The catalysed reaction is [(1-&gt;4)-alpha-D-glucosyl](n) + ADP-alpha-D-glucose = [(1-&gt;4)-alpha-D-glucosyl](n+1) + ADP + H(+). It participates in glycan biosynthesis; glycogen biosynthesis. In terms of biological role, synthesizes alpha-1,4-glucan chains using ADP-glucose. The protein is Glycogen synthase of Clostridium beijerinckii (strain ATCC 51743 / NCIMB 8052) (Clostridium acetobutylicum).